Here is a 29-residue protein sequence, read N- to C-terminus: Cytochrome b6-f complex subunit 8 (29 aa).

The chain crosses the membrane as a helical span at residues 3–23; it reads TVSLAWAALMVVFTFSLSLVV.

It belongs to the PetN family. In terms of assembly, the 4 large subunits of the cytochrome b6-f complex are cytochrome b6, subunit IV (17 kDa polypeptide, PetD), cytochrome f and the Rieske protein, while the 4 small subunits are PetG, PetL, PetM and PetN. The complex functions as a dimer.

It is found in the plastid. It localises to the chloroplast thylakoid membrane. In terms of biological role, component of the cytochrome b6-f complex, which mediates electron transfer between photosystem II (PSII) and photosystem I (PSI), cyclic electron flow around PSI, and state transitions. The polypeptide is Cytochrome b6-f complex subunit 8 (Chloranthus spicatus (Chulantree)).